Reading from the N-terminus, the 332-residue chain is Ferredoxin--NADP reductase 1 (332 aa).

Positions 35, 43, 48, 88, 123, 284, and 325 each coordinate FAD.

Belongs to the ferredoxin--NADP reductase type 2 family. In terms of assembly, homodimer. It depends on FAD as a cofactor.

It carries out the reaction 2 reduced [2Fe-2S]-[ferredoxin] + NADP(+) + H(+) = 2 oxidized [2Fe-2S]-[ferredoxin] + NADPH. The sequence is that of Ferredoxin--NADP reductase 1 from Listeria innocua serovar 6a (strain ATCC BAA-680 / CLIP 11262).